Consider the following 259-residue polypeptide: Ras-related protein Rab-34 (259 aa).

Met1 is modified (N-acetylmethionine). GTP is bound by residues Ser62, Val63, Gly64, Lys65, Thr66, Asp78, Tyr81, and Thr84. Mg(2+) is bound at residue Thr66. A Switch 1 motif is present at residues 71-89 (RFCKDTFDKNYKATIGVDF). 2 residues coordinate Mg(2+): Thr84 and Asp107. A Switch 2 motif is present at residues 108–127 (TAGQERFKCIASTYYRGAQA). Positions 110, 167, 169, and 198 each coordinate GTP. Phosphoserine occurs at positions 241 and 244. S-geranylgeranyl cysteine attachment occurs at residues Cys257 and Cys258.

Belongs to the small GTPase superfamily. Rab family. As to quaternary structure, interacts with RILP. The GTP-bound form interacts with REP15. The cofactor is Mg(2+).

The protein resides in the cytoplasm. Its subcellular location is the golgi apparatus. It is found in the cytoplasmic vesicle. It localises to the phagosome. The protein localises to the phagosome membrane. The protein resides in the cell projection. Its subcellular location is the cilium. It is found in the cytoskeleton. It localises to the microtubule organizing center. The protein localises to the centrosome. The protein resides in the centriole. It catalyses the reaction GTP + H2O = GDP + phosphate + H(+). Regulated by guanine nucleotide exchange factors (GEFs) which promote the exchange of bound GDP for free GTP. Regulated by GTPase activating proteins (GAPs) which increase the GTP hydrolysis activity. Inhibited by GDP dissociation inhibitors (GDIs). In terms of biological role, the small GTPases Rab are key regulators of intracellular membrane trafficking, from the formation of transport vesicles to their fusion with membranes. Rabs cycle between an inactive GDP-bound form and an active GTP-bound form that is able to recruit to membranes different sets of downstream effectors directly responsible for vesicle formation, movement, tethering and fusion. RAB34 transports protein involved in the redistribution of lysosomes to the peri-Golgi region. Plays a role in the maturation of phagosomes that engulf pathogens, such as S.aureus and M.tuberculosis. Plays a role in the fusion of phagosomes with lysosomes. Required for the early steps of intracellular ciliogenesis, the cilium assembly pathway initiated by trafficking and docking of ciliary vesicles to the centrioles in the cytoplasm, followed by axoneme formation in the cytoplasm. After axoneme elongation, the centrioles migrate close to the cell surface so that ciliary vesicles can fuse with the plasma membrane to expose cilia to the extracellular space. It seems dispensable for ciliogenesis via the extracellular pathway where cilium assembly begins after migration and docking of the centriole to the plasma membrane. Also acts as a positive regulator of hedgehog signaling and regulates ciliary function. The polypeptide is Ras-related protein Rab-34 (RAB34) (Sus scrofa (Pig)).